Consider the following 164-residue polypeptide: Peptidyl-prolyl cis-trans isomerase A-like 4C (164 aa).

The PPIase cyclophilin-type domain occupies Phe7–Gln163.

It belongs to the cyclophilin-type PPIase family. PPIase A subfamily.

It localises to the cytoplasm. The catalysed reaction is [protein]-peptidylproline (omega=180) = [protein]-peptidylproline (omega=0). Its function is as follows. PPIases accelerate the folding of proteins. It catalyzes the cis-trans isomerization of proline imidic peptide bonds in oligopeptides. The protein is Peptidyl-prolyl cis-trans isomerase A-like 4C of Homo sapiens (Human).